We begin with the raw amino-acid sequence, 242 residues long: Probable transcriptional regulatory protein Bxeno_A1185 (242 aa).

The protein belongs to the TACO1 family.

The protein resides in the cytoplasm. This is Probable transcriptional regulatory protein Bxeno_A1185 from Paraburkholderia xenovorans (strain LB400).